The following is a 262-amino-acid chain: Phosphatidylserine decarboxylase proenzyme (262 aa).

Active-site charge relay system; for autoendoproteolytic cleavage activity residues include D86, H142, and S226. The active-site Schiff-base intermediate with substrate; via pyruvic acid; for decarboxylase activity is S226. S226 carries the post-translational modification Pyruvic acid (Ser); by autocatalysis.

It belongs to the phosphatidylserine decarboxylase family. PSD-B subfamily. Prokaryotic type I sub-subfamily. As to quaternary structure, heterodimer of a large membrane-associated beta subunit and a small pyruvoyl-containing alpha subunit. Requires pyruvate as cofactor. Is synthesized initially as an inactive proenzyme. Formation of the active enzyme involves a self-maturation process in which the active site pyruvoyl group is generated from an internal serine residue via an autocatalytic post-translational modification. Two non-identical subunits are generated from the proenzyme in this reaction, and the pyruvate is formed at the N-terminus of the alpha chain, which is derived from the carboxyl end of the proenzyme. The autoendoproteolytic cleavage occurs by a canonical serine protease mechanism, in which the side chain hydroxyl group of the serine supplies its oxygen atom to form the C-terminus of the beta chain, while the remainder of the serine residue undergoes an oxidative deamination to produce ammonia and the pyruvoyl prosthetic group on the alpha chain. During this reaction, the Ser that is part of the protease active site of the proenzyme becomes the pyruvoyl prosthetic group, which constitutes an essential element of the active site of the mature decarboxylase.

It localises to the cell membrane. The catalysed reaction is a 1,2-diacyl-sn-glycero-3-phospho-L-serine + H(+) = a 1,2-diacyl-sn-glycero-3-phosphoethanolamine + CO2. The protein operates within phospholipid metabolism; phosphatidylethanolamine biosynthesis; phosphatidylethanolamine from CDP-diacylglycerol: step 2/2. Its function is as follows. Catalyzes the formation of phosphatidylethanolamine (PtdEtn) from phosphatidylserine (PtdSer). This Bacillus cereus (strain AH820) protein is Phosphatidylserine decarboxylase proenzyme.